A 298-amino-acid chain; its full sequence is uncharacterized protein (298 aa).

The 61-residue stretch at 1–61 folds into the HTH lysR-type domain; that stretch reads MDIFISKKMR…TRKDNNISLN (61 aa). Positions 21–40 form a DNA-binding region, H-T-H motif; that stretch reads IARAAEKIHMTASPFGKSIA.

The protein belongs to the LysR transcriptional regulatory family.

This is an uncharacterized protein from Escherichia coli (strain K12).